The chain runs to 177 residues: Transmembrane protein 275 (177 aa).

Positions 1–20 (MPQAKKSTETLAPAPPGRSR) are disordered. 2 helical membrane-spanning segments follow: residues 36–56 (GLCV…AAFL) and 63–83 (LVVG…CCVC). The disordered stretch occupies residues 113–177 (ESSERTAQDT…LNFPRDPAAS (65 aa)). The segment covering 128 to 161 (SPAASAASSGRSSPGPGLFALDPPAPATAAPYLP) has biased composition (low complexity).

The protein localises to the membrane. The polypeptide is Transmembrane protein 275 (Mus musculus (Mouse)).